The chain runs to 226 residues: 3-dehydroquinate dehydratase (226 aa).

Residues 29–31 (EFR) and Arg-56 contribute to the 3-dehydroquinate site. His-120 (proton donor/acceptor) is an active-site residue. Lys-146 functions as the Schiff-base intermediate with substrate in the catalytic mechanism. Positions 187, 208, and 212 each coordinate 3-dehydroquinate.

This sequence belongs to the type-I 3-dehydroquinase family. As to quaternary structure, homodimer.

The catalysed reaction is 3-dehydroquinate = 3-dehydroshikimate + H2O. The protein operates within metabolic intermediate biosynthesis; chorismate biosynthesis; chorismate from D-erythrose 4-phosphate and phosphoenolpyruvate: step 3/7. Involved in the third step of the chorismate pathway, which leads to the biosynthesis of aromatic amino acids. Catalyzes the cis-dehydration of 3-dehydroquinate (DHQ) and introduces the first double bond of the aromatic ring to yield 3-dehydroshikimate. In Halobacterium salinarum (strain ATCC 700922 / JCM 11081 / NRC-1) (Halobacterium halobium), this protein is 3-dehydroquinate dehydratase.